A 331-amino-acid polypeptide reads, in one-letter code: tRNA N6-adenosine threonylcarbamoyltransferase (331 aa).

The a divalent metal cation site is built by His108, His112, and Tyr129. Substrate is bound by residues 129–133 (YASGG), Asp161, Gly176, Glu180, and Asn261. Residue Asp289 coordinates a divalent metal cation.

The protein belongs to the KAE1 / TsaD family. As to quaternary structure, component of the EKC/KEOPS complex composed of at least BUD32, CGI121, GON7, KAE1 and PCC1; the whole complex dimerizes. Requires a divalent metal cation as cofactor.

The protein resides in the cytoplasm. Its subcellular location is the nucleus. The catalysed reaction is L-threonylcarbamoyladenylate + adenosine(37) in tRNA = N(6)-L-threonylcarbamoyladenosine(37) in tRNA + AMP + H(+). Its function is as follows. Component of the EKC/KEOPS complex that is required for the formation of a threonylcarbamoyl group on adenosine at position 37 (t(6)A37) in tRNAs that read codons beginning with adenine. The complex is probably involved in the transfer of the threonylcarbamoyl moiety of threonylcarbamoyl-AMP (TC-AMP) to the N6 group of A37. KAE1 likely plays a direct catalytic role in this reaction, but requires other protein(s) of the complex to fulfill this activity. The EKC/KEOPS complex also promotes both telomere uncapping and telomere elongation. The complex is required for efficient recruitment of transcriptional coactivators. This is tRNA N6-adenosine threonylcarbamoyltransferase from Encephalitozoon cuniculi (strain GB-M1) (Microsporidian parasite).